A 99-amino-acid polypeptide reads, in one-letter code: Aspartyl/glutamyl-tRNA(Asn/Gln) amidotransferase subunit C (99 aa).

Belongs to the GatC family. Heterotrimer of A, B and C subunits.

It catalyses the reaction L-glutamyl-tRNA(Gln) + L-glutamine + ATP + H2O = L-glutaminyl-tRNA(Gln) + L-glutamate + ADP + phosphate + H(+). The enzyme catalyses L-aspartyl-tRNA(Asn) + L-glutamine + ATP + H2O = L-asparaginyl-tRNA(Asn) + L-glutamate + ADP + phosphate + 2 H(+). Functionally, allows the formation of correctly charged Asn-tRNA(Asn) or Gln-tRNA(Gln) through the transamidation of misacylated Asp-tRNA(Asn) or Glu-tRNA(Gln) in organisms which lack either or both of asparaginyl-tRNA or glutaminyl-tRNA synthetases. The reaction takes place in the presence of glutamine and ATP through an activated phospho-Asp-tRNA(Asn) or phospho-Glu-tRNA(Gln). This is Aspartyl/glutamyl-tRNA(Asn/Gln) amidotransferase subunit C from Burkholderia mallei (strain NCTC 10247).